We begin with the raw amino-acid sequence, 777 residues long: MAAAGLVAVAAAAEYSGTVASGGNLPGVHCGPSSGAGPGFGPGSWSRSLDRALEEAAVTGVLSLSGRKLREFPRGAANHDLTDTTRADLSRNRLSEIPIEACHFVSLENLNLYQNCIRYIPEAILNLQALTFLNISRNQLSTLPVHLCNLPLKVLIASNNKLVSLPEEIGHLRHLMELDVSCNEIQTIPSQIGNLEALRDLNVRRNHLVHLPEELAELPLIRLDFSCNKITTIPVCYRNLRHLQTITLDNNPLQSPPAQICIKGKVHIFKYLNIQACKIAPDLPDYDRRPLGFGSCHEELYSSRPYGALDSGFNSVDSGDKRWSGNEPTDEFSDLPLRVAEITKEQRLRRESQYQENRGSLVVTNGGVEHDLDQIDYIDSCTAEEEEAEVRQPKGPDPDSLSSQFMAYIEQRRISHEGSPVKPVAIREFQKTEDMRRYLHQNRVPAEPSSLLSLSASHNQLSHTDLELHQRREQLVERTRREAQLAALQYEEEKIRTKQIQRDAVLDFVKQKASQSPQKQHPLLDGVDGECPFPSRRSQHTDDSALCMSLSGLNQVGCAATLPHSSAFTPLKSDDRPNALLSSPATETVHHSPAYSFPAAIQRNQPQRPESFLFRAGVRAETNKGHASPLPPSAAPTTDSTDSITGQNSRQREEELELIDQLRKHIEYRLKVSLPCDLGAALTDGVVLCHLANHVRPRSVPSIHVPSPAVPKLTMAKCRRNVENFLEACRKIGVPQEQLCLPLHILEEKGLSQVAVTVQALLELAPPKQQQHQLSAV.

LRR repeat units lie at residues 56–79 (AAVT…AANH), 81–104 (LTDT…ACHF), 105–127 (VSLE…ILNL), 128–150 (QALT…LCNL), 152–172 (LKVL…IGHL), 173–195 (RHLM…IGNL), 196–218 (EALR…LAEL), 220–239 (LIRL…CYRN), 240–264 (LRHL…CIKG), and 266–290 (VHIF…DRRP). Positions 56 to 290 (AAVTGVLSLS…PDLPDYDRRP (235 aa)) are mediates interaction with DOCK7. Phosphoserine is present on residues S324, S415, and S419. Positions 382-648 (TAEEEEAEVR…DSTDSITGQN (267 aa)) are mediates direct interaction with MYO6. The segment at 568–590 (FTPLKSDDRPNALLSSPATETVH) is disordered. A phosphoserine mark is found at S611 and S628. Residues 621–653 (ETNKGHASPLPPSAAPTTDSTDSITGQNSRQRE) are disordered. The segment covering 635–645 (APTTDSTDSIT) has biased composition (low complexity). Residues 652 to 765 (REEELELIDQ…VTVQALLELA (114 aa)) enclose the Calponin-homology (CH) domain.

As to quaternary structure, component of the DOCK7-induced septin displacement/DISP complex, at least composed of DOCK7, LRCH3 and MYO6.

The protein resides in the cytoplasm. As part of the DISP complex, may regulate the association of septins with actin and thereby regulate the actin cytoskeleton. This is DISP complex protein LRCH3 from Homo sapiens (Human).